The primary structure comprises 323 residues: Zinc finger C2HC domain-containing protein 1A (323 aa).

The segment at 14–43 (ELLPCKICGRTFFPVALKKHGPICQKTATK) adopts a C2HC/C3H-type 1 zinc-finger fold. Zn(2+) is bound by residues Cys-18, Cys-21, His-33, and Cys-37. Residues 42 to 81 (TKKRKTFDSSRQRAEGTDIPTVKPLKPRPEPPKKPSNWRR) form a disordered region. The span at 47 to 57 (TFDSSRQRAEG) shows a compositional bias: basic and acidic residues. Residues 117–146 (DYIQCPYCQRRFNENAADRHINFCKEQAAR) form a C2HC/C3H-type 2 zinc finger. Cys-121, Cys-124, His-136, and Cys-140 together coordinate Zn(2+). A disordered region spans residues 149-258 (NKGKFSTDTK…NPASGVLTSK (110 aa)). Positions 177-197 (SPGTTSSGSSRLPQPSGTSKT) are enriched in polar residues. The span at 198–214 (VVGAPSGKVSSVSSSSG) shows a compositional bias: low complexity. Ser-221 carries the phosphoserine modification. Thr-242 carries the post-translational modification Phosphothreonine. Residue Ser-290 is modified to Phosphoserine.

The protein belongs to the ZC2HC1 family. Zn(2+) serves as cofactor.

This is Zinc finger C2HC domain-containing protein 1A (ZC2HC1A) from Bos taurus (Bovine).